Reading from the N-terminus, the 316-residue chain is 2-phospho-L-lactate guanylyltransferase (316 aa).

Positions 72–85 are enriched in low complexity; sequence TGVSTEAVSTSTST. Disordered regions lie at residues 72–107 and 119–138; these read TGVS…PTHT and LRDD…DGDK. Polar residues predominate over residues 92–107; sequence HNAASDNYVSQSPTHT.

The protein belongs to the CofC family. Homodimer.

The catalysed reaction is (2S)-2-phospholactate + GTP + H(+) = (2S)-lactyl-2-diphospho-5'-guanosine + diphosphate. The protein operates within cofactor biosynthesis; coenzyme F420 biosynthesis. Functionally, guanylyltransferase that catalyzes the activation of (2S)-2-phospholactate (2-PL) as (2S)-lactyl-2-diphospho-5'-guanosine, via the condensation of 2-PL with GTP. It is involved in the biosynthesis of coenzyme F420, a hydride carrier cofactor. The sequence is that of 2-phospho-L-lactate guanylyltransferase from Haloquadratum walsbyi (strain DSM 16790 / HBSQ001).